We begin with the raw amino-acid sequence, 165 residues long: Ribosome maturation factor RimM (165 aa).

In terms of domain architecture, PRC barrel spans 94 to 165; sequence EDEFYIADLN…YGILNYKREV (72 aa).

This sequence belongs to the RimM family. As to quaternary structure, binds ribosomal protein uS19.

The protein localises to the cytoplasm. In terms of biological role, an accessory protein needed during the final step in the assembly of 30S ribosomal subunit, possibly for assembly of the head region. Essential for efficient processing of 16S rRNA. May be needed both before and after RbfA during the maturation of 16S rRNA. It has affinity for free ribosomal 30S subunits but not for 70S ribosomes. The protein is Ribosome maturation factor RimM of Rickettsia canadensis (strain McKiel).